The sequence spans 136 residues: Nucleoside diphosphate kinase (136 aa).

ATP is bound by residues Lys10, Phe58, Arg86, Thr92, Arg104, and Asn114. The Pros-phosphohistidine intermediate role is filled by His117.

This sequence belongs to the NDK family. In terms of assembly, homotetramer. Mg(2+) is required as a cofactor.

Its subcellular location is the cytoplasm. It carries out the reaction a 2'-deoxyribonucleoside 5'-diphosphate + ATP = a 2'-deoxyribonucleoside 5'-triphosphate + ADP. The enzyme catalyses a ribonucleoside 5'-diphosphate + ATP = a ribonucleoside 5'-triphosphate + ADP. In terms of biological role, major role in the synthesis of nucleoside triphosphates other than ATP. The ATP gamma phosphate is transferred to the NDP beta phosphate via a ping-pong mechanism, using a phosphorylated active-site intermediate. The chain is Nucleoside diphosphate kinase from Mycobacterium avium (strain 104).